Consider the following 545-residue polypeptide: CTP synthase (545 aa).

The interval 1–266 (MTTRYIFVTG…DELVVKRFGI (266 aa)) is amidoligase domain. Serine 14 contributes to the CTP binding site. Serine 14 serves as a coordination point for UTP. Residues 15–20 (SLGKGI) and aspartate 72 each bind ATP. Residues aspartate 72 and glutamate 140 each coordinate Mg(2+). Residues 147-149 (DIE), 187-192 (KTKPTQ), and lysine 223 contribute to the CTP site. Residues 187–192 (KTKPTQ) and lysine 223 each bind UTP. 239–241 (KDV) serves as a coordination point for ATP. One can recognise a Glutamine amidotransferase type-1 domain in the interval 291-542 (TIGMVGKYIE…VAAATAYQKR (252 aa)). Glycine 352 contacts L-glutamine. The Nucleophile; for glutamine hydrolysis role is filled by cysteine 379. L-glutamine-binding positions include 380-383 (LGLQ), glutamate 403, and arginine 470. Residues histidine 515 and glutamate 517 contribute to the active site.

It belongs to the CTP synthase family. As to quaternary structure, homotetramer.

It carries out the reaction UTP + L-glutamine + ATP + H2O = CTP + L-glutamate + ADP + phosphate + 2 H(+). The enzyme catalyses L-glutamine + H2O = L-glutamate + NH4(+). The catalysed reaction is UTP + NH4(+) + ATP = CTP + ADP + phosphate + 2 H(+). It functions in the pathway pyrimidine metabolism; CTP biosynthesis via de novo pathway; CTP from UDP: step 2/2. Its activity is regulated as follows. Allosterically activated by GTP, when glutamine is the substrate; GTP has no effect on the reaction when ammonia is the substrate. The allosteric effector GTP functions by stabilizing the protein conformation that binds the tetrahedral intermediate(s) formed during glutamine hydrolysis. Inhibited by the product CTP, via allosteric rather than competitive inhibition. Its function is as follows. Catalyzes the ATP-dependent amination of UTP to CTP with either L-glutamine or ammonia as the source of nitrogen. Regulates intracellular CTP levels through interactions with the four ribonucleotide triphosphates. The polypeptide is CTP synthase (Shewanella sediminis (strain HAW-EB3)).